The following is a 219-amino-acid chain: 2-C-methyl-D-erythritol 4-phosphate cytidylyltransferase (219 aa).

It belongs to the IspD/TarI cytidylyltransferase family. IspD subfamily.

The enzyme catalyses 2-C-methyl-D-erythritol 4-phosphate + CTP + H(+) = 4-CDP-2-C-methyl-D-erythritol + diphosphate. The protein operates within isoprenoid biosynthesis; isopentenyl diphosphate biosynthesis via DXP pathway; isopentenyl diphosphate from 1-deoxy-D-xylulose 5-phosphate: step 2/6. In terms of biological role, catalyzes the formation of 4-diphosphocytidyl-2-C-methyl-D-erythritol from CTP and 2-C-methyl-D-erythritol 4-phosphate (MEP). The chain is 2-C-methyl-D-erythritol 4-phosphate cytidylyltransferase from Bacteroides fragilis (strain ATCC 25285 / DSM 2151 / CCUG 4856 / JCM 11019 / LMG 10263 / NCTC 9343 / Onslow / VPI 2553 / EN-2).